A 252-amino-acid chain; its full sequence is Imidazole glycerol phosphate synthase subunit HisF (252 aa).

Catalysis depends on residues Asp-11 and Asp-130.

It belongs to the HisA/HisF family. As to quaternary structure, heterodimer of HisH and HisF.

The protein resides in the cytoplasm. The enzyme catalyses 5-[(5-phospho-1-deoxy-D-ribulos-1-ylimino)methylamino]-1-(5-phospho-beta-D-ribosyl)imidazole-4-carboxamide + L-glutamine = D-erythro-1-(imidazol-4-yl)glycerol 3-phosphate + 5-amino-1-(5-phospho-beta-D-ribosyl)imidazole-4-carboxamide + L-glutamate + H(+). The protein operates within amino-acid biosynthesis; L-histidine biosynthesis; L-histidine from 5-phospho-alpha-D-ribose 1-diphosphate: step 5/9. IGPS catalyzes the conversion of PRFAR and glutamine to IGP, AICAR and glutamate. The HisF subunit catalyzes the cyclization activity that produces IGP and AICAR from PRFAR using the ammonia provided by the HisH subunit. The chain is Imidazole glycerol phosphate synthase subunit HisF from Anoxybacillus flavithermus (strain DSM 21510 / WK1).